Consider the following 147-residue polypeptide: SsrA-binding protein (147 aa).

This sequence belongs to the SmpB family.

Its subcellular location is the cytoplasm. Functionally, required for rescue of stalled ribosomes mediated by trans-translation. Binds to transfer-messenger RNA (tmRNA), required for stable association of tmRNA with ribosomes. tmRNA and SmpB together mimic tRNA shape, replacing the anticodon stem-loop with SmpB. tmRNA is encoded by the ssrA gene; the 2 termini fold to resemble tRNA(Ala) and it encodes a 'tag peptide', a short internal open reading frame. During trans-translation Ala-aminoacylated tmRNA acts like a tRNA, entering the A-site of stalled ribosomes, displacing the stalled mRNA. The ribosome then switches to translate the ORF on the tmRNA; the nascent peptide is terminated with the 'tag peptide' encoded by the tmRNA and targeted for degradation. The ribosome is freed to recommence translation, which seems to be the essential function of trans-translation. In Mycoplasmopsis fermentans (strain ATCC 19989 / NBRC 14854 / NCTC 10117 / PG18) (Mycoplasma fermentans), this protein is SsrA-binding protein.